We begin with the raw amino-acid sequence, 281 residues long: uncharacterized protein (281 aa).

2 disordered regions span residues 192–212 (SNSS…IQET) and 227–281 (EDYV…SEEY). The segment covering 200–211 (MDKKSDDSKIQE) has biased composition (basic and acidic residues). Acidic residues-rich tracts occupy residues 227–240 (EDYV…ISDN) and 249–260 (DTDSDLGDLEDP).

The protein belongs to the cullin family.

This is an uncharacterized protein from Acanthamoeba polyphaga (Amoeba).